A 104-amino-acid chain; its full sequence is Pyrimidine/purine nucleoside phosphorylase (104 aa).

Belongs to the nucleoside phosphorylase PpnP family.

The enzyme catalyses a purine D-ribonucleoside + phosphate = a purine nucleobase + alpha-D-ribose 1-phosphate. It catalyses the reaction adenosine + phosphate = alpha-D-ribose 1-phosphate + adenine. The catalysed reaction is cytidine + phosphate = cytosine + alpha-D-ribose 1-phosphate. It carries out the reaction guanosine + phosphate = alpha-D-ribose 1-phosphate + guanine. The enzyme catalyses inosine + phosphate = alpha-D-ribose 1-phosphate + hypoxanthine. It catalyses the reaction thymidine + phosphate = 2-deoxy-alpha-D-ribose 1-phosphate + thymine. The catalysed reaction is uridine + phosphate = alpha-D-ribose 1-phosphate + uracil. It carries out the reaction xanthosine + phosphate = alpha-D-ribose 1-phosphate + xanthine. Catalyzes the phosphorolysis of diverse nucleosides, yielding D-ribose 1-phosphate and the respective free bases. Can use uridine, adenosine, guanosine, cytidine, thymidine, inosine and xanthosine as substrates. Also catalyzes the reverse reactions. This is Pyrimidine/purine nucleoside phosphorylase from Thiobacillus denitrificans (strain ATCC 25259 / T1).